The primary structure comprises 241 residues: Orotidine 5'-phosphate decarboxylase (241 aa).

Residues Asp-18, Lys-39, 66-75 (DLKFHDIPAT), Thr-130, Arg-192, Gln-201, Gly-221, and Arg-222 each bind substrate. Residue Lys-68 is the Proton donor of the active site.

It belongs to the OMP decarboxylase family. Type 1 subfamily. Homodimer.

The enzyme catalyses orotidine 5'-phosphate + H(+) = UMP + CO2. It functions in the pathway pyrimidine metabolism; UMP biosynthesis via de novo pathway; UMP from orotate: step 2/2. In terms of biological role, catalyzes the decarboxylation of orotidine 5'-monophosphate (OMP) to uridine 5'-monophosphate (UMP). The polypeptide is Orotidine 5'-phosphate decarboxylase (Synechococcus sp. (strain CC9605)).